The primary structure comprises 77 residues: UPF0401 protein UTI89_C4989 (77 aa).

This sequence belongs to the UPF0401 family.

This is UPF0401 protein UTI89_C4989 from Escherichia coli (strain UTI89 / UPEC).